We begin with the raw amino-acid sequence, 255 residues long: Triosephosphate isomerase (255 aa).

15–17 (NWK) provides a ligand contact to substrate. His100 serves as the catalytic Electrophile. Glu172 functions as the Proton acceptor in the catalytic mechanism. Residues Gly178, Ser218, and 239-240 (GG) each bind substrate.

The protein belongs to the triosephosphate isomerase family. In terms of assembly, homodimer.

Its subcellular location is the cytoplasm. The enzyme catalyses D-glyceraldehyde 3-phosphate = dihydroxyacetone phosphate. It participates in carbohydrate biosynthesis; gluconeogenesis. Its pathway is carbohydrate degradation; glycolysis; D-glyceraldehyde 3-phosphate from glycerone phosphate: step 1/1. Involved in the gluconeogenesis. Catalyzes stereospecifically the conversion of dihydroxyacetone phosphate (DHAP) to D-glyceraldehyde-3-phosphate (G3P). The polypeptide is Triosephosphate isomerase (Clostridium tetani (strain Massachusetts / E88)).